We begin with the raw amino-acid sequence, 118 residues long: Heavy metal-associated isoprenylated plant protein 12 (118 aa).

One can recognise an HMA domain in the interval 1–65; the sequence is MQVVVLKLDV…KICHTEFISV (65 aa). Residues 68–87 form a disordered region; the sequence is VKEPEKKKPDDPKKPETKPP. Residues 69 to 86 are compositionally biased toward basic and acidic residues; that stretch reads KEPEKKKPDDPKKPETKP. C115 carries the post-translational modification Cysteine methyl ester. Residue C115 is the site of S-farnesyl cysteine attachment. Positions 116 to 118 are cleaved as a propeptide — removed in mature form; it reads VTS.

This sequence belongs to the HIPP family.

Functionally, probable heavy-metal-binding protein. This is Heavy metal-associated isoprenylated plant protein 12 from Arabidopsis thaliana (Mouse-ear cress).